We begin with the raw amino-acid sequence, 145 residues long: D-aminoacyl-tRNA deacylase (145 aa).

The Gly-cisPro motif, important for rejection of L-amino acids signature appears at 137–138; the sequence is GP.

Belongs to the DTD family. Homodimer.

The protein resides in the cytoplasm. The catalysed reaction is glycyl-tRNA(Ala) + H2O = tRNA(Ala) + glycine + H(+). The enzyme catalyses a D-aminoacyl-tRNA + H2O = a tRNA + a D-alpha-amino acid + H(+). Its function is as follows. An aminoacyl-tRNA editing enzyme that deacylates mischarged D-aminoacyl-tRNAs. Also deacylates mischarged glycyl-tRNA(Ala), protecting cells against glycine mischarging by AlaRS. Acts via tRNA-based rather than protein-based catalysis; rejects L-amino acids rather than detecting D-amino acids in the active site. By recycling D-aminoacyl-tRNA to D-amino acids and free tRNA molecules, this enzyme counteracts the toxicity associated with the formation of D-aminoacyl-tRNA entities in vivo and helps enforce protein L-homochirality. The chain is D-aminoacyl-tRNA deacylase from Cereibacter sphaeroides (strain ATCC 17029 / ATH 2.4.9) (Rhodobacter sphaeroides).